The primary structure comprises 330 residues: Probable cell division protein WhiA (330 aa).

Positions S275 to E308 form a DNA-binding region, H-T-H motif.

It belongs to the WhiA family.

Involved in cell division and chromosome segregation. This is Probable cell division protein WhiA from Kocuria rhizophila (strain ATCC 9341 / DSM 348 / NBRC 103217 / DC2201).